We begin with the raw amino-acid sequence, 640 residues long: 1,4-alpha-glucan branching enzyme GlgB (640 aa).

The active-site Nucleophile is Asp317. Catalysis depends on Glu370, which acts as the Proton donor.

This sequence belongs to the glycosyl hydrolase 13 family. GlgB subfamily. As to quaternary structure, monomer.

It carries out the reaction Transfers a segment of a (1-&gt;4)-alpha-D-glucan chain to a primary hydroxy group in a similar glucan chain.. Its pathway is glycan biosynthesis; glycogen biosynthesis. In terms of biological role, catalyzes the formation of the alpha-1,6-glucosidic linkages in glycogen by scission of a 1,4-alpha-linked oligosaccharide from growing alpha-1,4-glucan chains and the subsequent attachment of the oligosaccharide to the alpha-1,6 position. In Nitratidesulfovibrio vulgaris (strain ATCC 29579 / DSM 644 / CCUG 34227 / NCIMB 8303 / VKM B-1760 / Hildenborough) (Desulfovibrio vulgaris), this protein is 1,4-alpha-glucan branching enzyme GlgB.